Here is a 123-residue protein sequence, read N- to C-terminus: Hydrogenase maturation factor HypA (123 aa).

Residue H2 participates in Ni(2+) binding. The Zn(2+) site is built by C73, C76, C90, and C93.

This sequence belongs to the HypA/HybF family.

Its function is as follows. Involved in the maturation of [NiFe] hydrogenases. Required for nickel insertion into the metal center of the hydrogenase. The protein is Hydrogenase maturation factor HypA of Roseiflexus sp. (strain RS-1).